The chain runs to 313 residues: Formate-nitrite transporter (313 aa).

At 1 to 47 the chain is on the cytoplasmic side; it reads MPKSNTKYVIDPLSVKTSCSSEESYIRCVEYGKSKAHYSSLILLAKA. A helical membrane pass occupies residues 48–68; the sequence is ILAGVFVGVCAHASGIAGGLF. Over 69–77 the chain is Extracellular; the sequence is YYHKLREYV. A helical membrane pass occupies residues 78 to 98; it reads GASMSAFVYGFTFPIAFLCII. The Cytoplasmic segment spans residues 99-128; it reads CTGSDLFTGNTLAVTTALLHGKVSCLEYVR. Residues 129-149 form a helical membrane-spanning segment; the sequence is VMCISLFGNYVGAVSFAFFVS. Over 150 to 185 the chain is Extracellular; it reads YGSGAFHKKEQVDKNHIFQFLNDIAVKKVNHTFVEC. Residue Asn179 is glycosylated (N-linked (GlcNAc...) asparagine). The chain crosses the membrane as a helical span at residues 186–206; the sequence is ICLAIGCNIFVCLAVYFVLSI. Residues 207 to 211 are Cytoplasmic-facing; it reads KDGSG. A helical membrane pass occupies residues 212 to 232; it reads MVFSVFFAVYAFAIAGYEHII. Topologically, residues 233 to 260 are extracellular; sequence ANIYTLNISLMIDTEVSFTQVYFKNLLP. N-linked (GlcNAc...) asparagine glycosylation occurs at Asn239. Residues 261–281 traverse the membrane as a helical segment; it reads TLIGNYIAGALVLACPLFFIY. Residues 282 to 313 lie on the Cytoplasmic side of the membrane; the sequence is RSYYINYEKMNEPSGGSLRSISIEMKNDGGAT.

The protein belongs to the FNT transporter (TC 1.A.16) family. In terms of assembly, homopentamer.

The protein resides in the cell membrane. The protein localises to the vacuole membrane. The catalysed reaction is (S)-lactate(in) + H(+)(in) = (S)-lactate(out) + H(+)(out). It carries out the reaction formate(in) + H(+)(in) = formate(out) + H(+)(out). It catalyses the reaction pyruvate(out) + H(+)(out) = pyruvate(in) + H(+)(in). The enzyme catalyses acetate(out) + H(+)(out) = acetate(in) + H(+)(in). Its activity is regulated as follows. Inhibited by the Malaria Box compound MMV007839 and its derivatives BH296 and BH267.meta. Its function is as follows. Monocarboxylate-proton symporter that mediates the efflux of the waste product lactate in the intraerythrocytic parasites; active in acidic-to-neutral pH range. Transports L-lactate. The polypeptide is Formate-nitrite transporter (Plasmodium ovale).